We begin with the raw amino-acid sequence, 97 residues long: Large ribosomal subunit protein bL27 (97 aa).

The segment at 1 to 23 is disordered; that stretch reads MAHKKGASSSRNGRDSTSKRLGV.

It belongs to the bacterial ribosomal protein bL27 family.

The chain is Large ribosomal subunit protein bL27 from Acidothermus cellulolyticus (strain ATCC 43068 / DSM 8971 / 11B).